The chain runs to 185 residues: MINVNDLKSGVTFQLEGAIYVVLEASHSKQGRGQANVKVKVKDLRTGSTTIRSFTGGEKVERAMIEKTNMDFLYNSGEAIVLMDQETFEQIEIPLNHVEWELNFLKEGQKVMVRKFQEEVLDIELPANVTLKVVSAPDAVKGNTAQAAQKKVTLETDFVVETPLFIKEGEEILVSTETGKYVGRA.

It belongs to the elongation factor P family.

Its subcellular location is the cytoplasm. It participates in protein biosynthesis; polypeptide chain elongation. Functionally, involved in peptide bond synthesis. Stimulates efficient translation and peptide-bond synthesis on native or reconstituted 70S ribosomes in vitro. Probably functions indirectly by altering the affinity of the ribosome for aminoacyl-tRNA, thus increasing their reactivity as acceptors for peptidyl transferase. The chain is Elongation factor P from Metamycoplasma arthritidis (strain 158L3-1) (Mycoplasma arthritidis).